A 744-amino-acid chain; its full sequence is Tripartite motif-containing protein 3 (744 aa).

Ala-2 is modified (N-acetylalanine). The segment at 2-290 (AKREDSPGPE…LAAQAFPERP (289 aa)) is interaction with KIF21B. A Phosphoserine modification is found at Ser-7. The RING-type zinc-finger motif lies at 22 to 63 (CSICLDRYRCPKVLPCLHTFCERCLQNYIPPQSLTLSCPVCR). Residues 110–151 (GRPLSCPNHEGKTMEFYCEACETAMCGECRAGEHREHGTVLL) form a B box-type zinc finger. Residues Cys-115, His-118, Cys-138, and His-143 each coordinate Zn(2+). The stretch at 153–224 (DVVEQHKAAL…RKQALVSDLE (72 aa)) forms a coiled coil. One copy of the Filamin repeat lies at 317-418 (TTSAAAHETV…VRGSPFRVRA (102 aa)). The disordered stretch occupies residues 420–462 (RPGDLPPSPDDVKRRVKSPGGPGSHVRQKAVRRPSSMYSTGGK). The residue at position 427 (Ser-427) is a Phosphoserine. NHL repeat units lie at residues 473 to 516 (VFRV…FSNE), 520 to 563 (KFRF…FSPE), 564 to 605 (GKFK…FQPN), 609 to 652 (VGRF…YSAD), 656 to 699 (LFKF…FDSS), and 700 to 743 (GSFL…YRYL).

It belongs to the TRIM/RBCC family. Forms homooligomers. Interacts with TRIM2; this interaction reduces TRIM2 activity. Associates with myosin-Vb (MYO5B) and alpha-actinin-4 (ACTN4). Component of the CART complex, at least composed of ACTN4, HGS/HRS, MYO5B and TRIM3. Interacts with ZFYVE28/LST2. Interacts with KIF21B. In terms of tissue distribution, highly expressed in the brain, moderate levels in the lung, very low levels in the liver, kidney and heart. In the brain, expression was highest in the cerebellum. Expression in the brain is found at low levels at embryonic day 15 and then increases during the first two postnatal weeks before decreasing through adulthood.

The protein resides in the cytoplasm. It localises to the early endosome. Its subcellular location is the golgi apparatus. It is found in the trans-Golgi network. The protein localises to the cell projection. The protein resides in the dendrite. The catalysed reaction is S-ubiquitinyl-[E2 ubiquitin-conjugating enzyme]-L-cysteine + [acceptor protein]-L-lysine = [E2 ubiquitin-conjugating enzyme]-L-cysteine + N(6)-ubiquitinyl-[acceptor protein]-L-lysine.. In terms of biological role, E3 ubiquitin ligase that plays essential roles in neuronal functions such as regulation of neuronal plasticity, learning, and memory. In addition to its neuronal functions, participates in other biological processes such as innate immunity or cell cycle regulation. Component of the cytoskeleton-associated recycling or transport complex in neurons, polyubiquitinates gamma-actin, thus regulating neuronal plasticity, learning, and memory. Ubiquitinates postsynaptic scaffold GKAP, a neuronal substrate involved in synaptic remodeling and thereby modulates dendritic spine morphology. Positively regulates motility of microtubule-dependent motor protein KIF21B. Induces growth arrest via its RING-dependent E3 ligase activity and ubiquinates CDKN1A. Positively regulates TLR3-mediated signaling by mediating 'Lys-63'-linked polyubiquitination of TLR3. In turn, promotes the recognition and sorting of polyubiquitinated TLR3 by the ESCRT complexes. This Rattus norvegicus (Rat) protein is Tripartite motif-containing protein 3 (Trim3).